A 506-amino-acid polypeptide reads, in one-letter code: MDAPSRSHLASPILVANYRSLPSFMYRDSLPEAAVSPQLLALNTRLLETLEQDLAWFNSSDALEQLSGKTYYGSNLPFALAYSGHQFGGWSPVLGDGRAHVLGQLKTAADELIDVQLKGSGATPFSRGGDGRATLGAVIREYLLSEAMAGLNISTTGSLAVIATGEDVWRNGAYPGAILVRTAKSHLRVGSFQYAAVHQGPEAVKTLADFALAQYYPELSHDENPYQALLAQVIKGQAELVAQWMLVGFIHGVMNTDNSSITGETIDYGPCAFMDEFNPNKVFSSIDSQGRYAWGNQGAIAQWNMARLGETLLPLLDSDEAKALEIAQAQLGDFNRLFAEHFYQGMARKLSLDASDPELIPFVDSTLQLMTNTRVDFCQFFNALTEYHSTHREQDAGLVALFSTEAFPSLSSTPAQLLQDWLSQWQAKACDSQAALAAMIKANPKFIARNHKVEAAISAAEQNNDYSLFLDMARVLANPYVLAEQDKHYQDAPTPDQRVKQTFCGT.

ATP-binding residues include Gly95, Gly97, Arg98, Lys118, Asp130, Gly131, Arg181, and Arg188. The Proton acceptor role is filled by Asp257. Residues Asn258 and Asp267 each contribute to the Mg(2+) site. ATP is bound at residue Asp267. A disordered region spans residues 487–506; that stretch reads KHYQDAPTPDQRVKQTFCGT.

The protein belongs to the SELO family. The cofactor is Mg(2+). It depends on Mn(2+) as a cofactor.

The enzyme catalyses L-seryl-[protein] + ATP = 3-O-(5'-adenylyl)-L-seryl-[protein] + diphosphate. It catalyses the reaction L-threonyl-[protein] + ATP = 3-O-(5'-adenylyl)-L-threonyl-[protein] + diphosphate. It carries out the reaction L-tyrosyl-[protein] + ATP = O-(5'-adenylyl)-L-tyrosyl-[protein] + diphosphate. The catalysed reaction is L-histidyl-[protein] + UTP = N(tele)-(5'-uridylyl)-L-histidyl-[protein] + diphosphate. The enzyme catalyses L-seryl-[protein] + UTP = O-(5'-uridylyl)-L-seryl-[protein] + diphosphate. It catalyses the reaction L-tyrosyl-[protein] + UTP = O-(5'-uridylyl)-L-tyrosyl-[protein] + diphosphate. Functionally, nucleotidyltransferase involved in the post-translational modification of proteins. It can catalyze the addition of adenosine monophosphate (AMP) or uridine monophosphate (UMP) to a protein, resulting in modifications known as AMPylation and UMPylation. The polypeptide is Protein nucleotidyltransferase YdiU (Shewanella denitrificans (strain OS217 / ATCC BAA-1090 / DSM 15013)).